We begin with the raw amino-acid sequence, 177 residues long: Thymidine kinase (177 aa).

11 to 18 lines the ATP pocket; sequence GPMFSGKS. Glu83 functions as the Proton acceptor in the catalytic mechanism. Phe113 lines the substrate pocket. Zn(2+) is bound by residues Cys138 and Cys141. 157 to 161 is a binding site for substrate; the sequence is IEIIG. Residues Cys170 and Cys173 each contribute to the Zn(2+) site.

Belongs to the thymidine kinase family. Homotetramer. Two molecules of substrate bind to each enzyme tetramer.

The enzyme catalyses thymidine + ATP = dTMP + ADP + H(+). In terms of biological role, phosphorylates thymidine and thymidine analogs, such as azidothymidine (AZT). Part of the salvage pathway for pyrimidine deoxyribonucleotide synthesis. The protein is Thymidine kinase (OPG101) of Cynomys gunnisoni (Gunnison's prairie dog).